The chain runs to 440 residues: Gamma-aminobutyric acid receptor subunit pi (440 aa).

An N-terminal signal peptide occupies residues 1–23; the sequence is MSYSLYLAFLCLSLLTQRTCIQG. Topologically, residues 24–241 are extracellular; the sequence is NQVNVEVSRS…LVLQFELRRN (218 aa). N-linked (GlcNAc...) asparagine glycans are attached at residues asparagine 43, asparagine 102, and asparagine 145. A disulfide bridge links cysteine 160 with cysteine 174. Residues asparagine 196 and asparagine 228 are each glycosylated (N-linked (GlcNAc...) asparagine). A helical membrane pass occupies residues 242–262; the sequence is VLYFILETYVPSTFLVVLSWV. The Cytoplasmic segment spans residues 263-270; it reads SFWISLDS. The helical transmembrane segment at 271-290 threads the bilayer; the sequence is VPARTCIGVTTVLSMTTLMI. The Extracellular segment spans residues 291–301; sequence GSRTSLPNTNC. A helical membrane pass occupies residues 302 to 322; the sequence is FIKAIDVYLGICFSFVFGALL. Topologically, residues 323–419 are cytoplasmic; it reads EYAVAHYSSL…NPSNVDRYSK (97 aa). Residues 420–440 traverse the membrane as a helical segment; that stretch reads LLFPLIFMLANVFYWAYYMYF.

This sequence belongs to the ligand-gated ion channel (TC 1.A.9) family. Gamma-aminobutyric acid receptor (TC 1.A.9.5) subfamily. GABRP sub-subfamily. In terms of assembly, heteropentamer, formed by a combination of alpha (GABRA1-6), beta (GABRB1-3), gamma (GABRG1-3), delta (GABRD), epsilon (GABRE), rho (GABRR1-3), pi (GABRP) and theta (GABRQ) chains, each subunit exhibiting distinct physiological and pharmacological properties.

It localises to the cell membrane. The protein localises to the apical cell membrane. The enzyme catalyses chloride(in) = chloride(out). In terms of biological role, pi subunit of the heteropentameric ligand-gated chloride channel gated by gamma-aminobutyric acid (GABA). GABA-gated chloride channels, also named GABA(A) receptors (GABAAR), consist of five subunits arranged around a central pore and contain GABA active binding site(s) located at the alpha and beta subunit interfaces. When activated by GABA, GABAARs selectively allow the flow of chloride anions across the cell membrane down their electrochemical gradient. Pi-containing GABAARs are mostly located in peripheral tissues. In the uterus, pi subunits modulate uterus contraction by altering the sensitivity of GABAARs to pregnanolone. In the lungs, pi-containing GABAARs contribute to pulmonary fluid transport via luminal secretion of chloride. The chain is Gamma-aminobutyric acid receptor subunit pi from Mus musculus (Mouse).